Here is a 263-residue protein sequence, read N- to C-terminus: MICARIRPLISSPLAFTISTTKHSRINLRLLPRRSFSVMSSSTPQSQIIEHIVLFKTKDDADSTKITSMINNLNALAYLDQVLHISTSPLHRISSATAFTHVLHSRYESKEDLASYAAHPDHVRVVKESVLPICDDIMAVDWIADRIPGTVAPLPGSVAKLTLLKLKEDVADEAKSEITGVIKGLSEKFPGIDQITVGENFSPARAKGFSIASIAYFKDLSEMEAVDAQKELVNSQKDKVRDYVDSTIVVEFVVPSSSQSSSL.

Stress-response A/B barrel domains follow at residues 49–142 (IEHI…AVDW) and 158–252 (VAKL…VVEF). The Peroxisomal targeting signal signature appears at 261 to 263 (SSL).

As to quaternary structure, homodimer.

The protein localises to the peroxisome. Functionally, involved in stress response. This Arabidopsis thaliana (Mouse-ear cress) protein is Stress-response A/B barrel domain-containing protein UP3.